A 929-amino-acid chain; its full sequence is Facilitated trehalose transporter Tret1 (929 aa).

The tract at residues 1–275 (MSGRDNRAAG…VGYQQQKATS (275 aa)) is disordered. The Cytoplasmic segment spans residues 1–462 (MSGRDNRAAG…LEVYRPTTNP (462 aa)). Over residues 10-26 (GAGGGSGGGGGGGGGGG) the composition is skewed to gly residues. Basic and acidic residues predominate over residues 41–59 (KLKEKLTRAGEELGYHRVE). Residues 60–72 (SNLSASNTATSLD) are compositionally biased toward polar residues. Low complexity-rich tracts occupy residues 85–141 (AAPQ…QPLR), 168–178 (QEIQQQQLQQQ), and 237–254 (SNSNNNSKNNSKTTVAAD). 3 positions are modified to phosphoserine: Ser-320, Ser-321, and Ser-322. The disordered stretch occupies residues 352 to 371 (VLHGSSTDSDEEGEDAEHKR). 2 positions are modified to phosphoserine: Ser-392 and Ser-394. Residues 398-420 (FLSSRQNFQQQRSISTDSRKSRR) form a disordered region. Over residues 402 to 413 (RQNFQQQRSIST) the composition is skewed to polar residues. The helical transmembrane segment at 463 to 483 (IYIWTQVLAALSVSLGSLVVG) threads the bilayer. The Extracellular segment spans residues 484–512 (FSSAYTSPALVSMTDRNLTSFDVSTEDAS). An N-linked (GlcNAc...) asparagine glycan is attached at Asn-500. A helical membrane pass occupies residues 513–533 (WVGGIMPLAGLAGGIAGGPLI). At 534–541 (EYLGRRNT) the chain is on the cytoplasmic side. Residues 542 to 562 (ILATAVPFIISWLLIACAVNV) traverse the membrane as a helical segment. The Extracellular segment spans residues 563–569 (PMVLSGR). A helical membrane pass occupies residues 570 to 590 (FLAGFCVGIASLSLPVYLGET). Over 591 to 596 (VQPEVR) the chain is Cytoplasmic. Residues 597 to 617 (GTLGLLPTAFGNIGILLCFIA) form a helical membrane-spanning segment. Residues 618–624 (GTYMDWS) are Extracellular-facing. Residues 625-645 (MLAFLGGALPVPFLILMFLIP) form a helical membrane-spanning segment. Residues 646 to 708 (ETPRWYVSRG…ELLKRSNLKP (63 aa)) lie on the Cytoplasmic side of the membrane. Residues 709–729 (LSISLGLMFFQQLSGINAVIF) traverse the membrane as a helical segment. The Extracellular segment spans residues 730-745 (YTVQIFKDAGSTLDGN). The helical transmembrane segment at 746–766 (VCTIIVGTVNFIATFIGILLI) threads the bilayer. Topologically, residues 767–772 (DRAGRK) are cytoplasmic. Residues 773–793 (ILLYVSNIAMILTLFVLGGFF) traverse the membrane as a helical segment. The Extracellular portion of the chain corresponds to 794–804 (YCKANGMDVSN). Residues 805 to 825 (VGLLPLCCFVVYILGFSLGFG) traverse the membrane as a helical segment. Over 826 to 839 (PIPWLMMGEILPAK) the chain is Cytoplasmic. The chain crosses the membrane as a helical span at residues 840-860 (IRGSAASVATAFNWTCTFVVT). The Extracellular portion of the chain corresponds to 861 to 873 (KSFLDMIKLIGAH). Residues 874-894 (GAFWLFGVICCIGMFFVIFCV) traverse the membrane as a helical segment. The Cytoplasmic portion of the chain corresponds to 895-929 (PETQGKTLEDIERKMMGRVRRMSSVANIKPLSFNM). Ser-917 and Ser-918 each carry phosphoserine.

It belongs to the major facilitator superfamily. Sugar transporter (TC 2.A.1.1) family. Trehalose transporter subfamily.

It is found in the cell membrane. Low-capacity facilitative transporter for trehalose. Does not transport maltose, sucrose or lactose. Mediates the bidirectional transfer of trehalose. Responsible for the transport of trehalose synthesized in the fat body and the incorporation of trehalose into other tissues that require a carbon source, thereby regulating trehalose levels in the hemolymph. The protein is Facilitated trehalose transporter Tret1 of Drosophila grimshawi (Hawaiian fruit fly).